A 964-amino-acid polypeptide reads, in one-letter code: SKI family transcriptional corepressor 1 (964 aa).

Disordered regions lie at residues 45–72, 278–365, 414–461, 525–587, 610–768, and 794–842; these read TQLG…SSAL, RTFS…GGSA, AGEP…WGHQ, AGGG…RKSS, REAY…GAAK, and LCTP…EDGL. A compositionally biased stretch (gly residues) spans 283–310; it reads QGGGGGGANSGSGGAGKGGAGGGGGPGC. The span at 345–355 shows a compositional bias: low complexity; sequence ALGLAAAASGP. Composition is skewed to gly residues over residues 356 to 365 and 417 to 440; these read AGPGGPGGSA and PKGG…GPGA. Over residues 571–583 the composition is skewed to pro residues; the sequence is SLGPLPPPPPPPA. Residues 652 to 661 show a composition bias toward acidic residues; that stretch reads DTADEPEVDV. Residues 798–808 show a composition bias toward basic and acidic residues; it reads ETHEPDKEDNH. A compositionally biased stretch (polar residues) spans 823 to 834; that stretch reads DQRSVSQPSPAN. Residues 853-921 adopt a coiled-coil conformation; that stretch reads EKDIENLARE…DTLCNELDQE (69 aa).

This sequence belongs to the SKI family. Interacts with SMAD1, SMAD2 and SMAD3. Interacts with LBX1. As to expression, expressed in brain with higher levels in embryo than adult. Expressed by migratory precursors of Purkinje cells in the postnatal brain. Also expressed in adult testis.

The protein resides in the nucleus. In terms of biological role, inhibits BMP signaling. Acts as a transcriptional corepressor of LBX1. This Mus musculus (Mouse) protein is SKI family transcriptional corepressor 1 (Skor1).